The primary structure comprises 122 residues: Diacylglycerol kinase (122 aa).

Residues Arg-10 and Tyr-17 each coordinate ATP. Residues Arg-10, 14 to 19 (AAGYSW), and 23 to 26 (RAAW) each bind substrate. Glu-29 contacts ATP. Residue Glu-29 coordinates a divalent metal cation. Substrate contacts are provided by residues 31-35 (AFRQE), 48-51 (WLDV), Arg-56, and Glu-70. A helical transmembrane segment spans residues 35–55 (EGVAVLLAVVIACWLDVDAIT). The helical transmembrane segment at 57-77 (VLLISSVMLVMIVEILNSAIE) threads the bilayer. Glu-70 functions as the Proton acceptor in the catalytic mechanism. Residues Glu-77, 86–88 (EYH), and 95–96 (KD) each bind ATP. Position 77 (Glu-77) interacts with a divalent metal cation. A helical transmembrane segment spans residues 98–118 (GSAAVLIAIIVAVITWCILLW). Substrate-binding positions include Ser-99 and 113–118 (WCILLW).

The protein belongs to the bacterial diacylglycerol kinase family. Mg(2+) is required as a cofactor.

Its subcellular location is the cell inner membrane. It catalyses the reaction a 1,2-diacyl-sn-glycerol + ATP = a 1,2-diacyl-sn-glycero-3-phosphate + ADP + H(+). Catalyzes the ATP-dependent phosphorylation of sn-l,2-diacylglycerol (DAG) to phosphatidic acid. Involved in the recycling of diacylglycerol produced as a by-product during membrane-derived oligosaccharide (MDO) biosynthesis. This is Diacylglycerol kinase (dgkA) from Shigella flexneri.